Reading from the N-terminus, the 176-residue chain is Centromere protein R (176 aa).

Lys8 is covalently cross-linked (Glycyl lysine isopeptide (Lys-Gly) (interchain with G-Cter in SUMO2)). Ser17 is modified (phosphoserine). Residues 20–50 (PSKIVRKKSITAYSPTTGTYQLSPFSSPATP) are DD1. Residue Lys22 forms a Glycyl lysine isopeptide (Lys-Gly) (interchain with G-Cter in SUMO2) linkage. Ser28 carries the phosphoserine modification. Over residues 34-48 (PTTGTYQLSPFSSPA) the composition is skewed to polar residues. The disordered stretch occupies residues 34–78 (PTTGTYQLSPFSSPATPKEQEHRNGPSNETRKRSNLSSPVRQEST). Residues 51-65 (KEQEHRNGPSNETRK) are compositionally biased toward basic and acidic residues. Positions 63 to 66 (TRKR) match the Nuclear localization signal motif. The residue at position 71 (Ser71) is a Phosphoserine. Residues 82–112 (RDGFMVLLSKIEISSEKTMEIMKNLSSIQAL) are a coiled coil. An LXXIL motif motif is present at residues 171–175 (LKAIL).

As to quaternary structure, homodimer; mediated by the coiled coil domain. Interacts with CCNA2 and MTA1. Interacts with NFKB1 NF-kappa-B subunit. Component of the CENPA-CAD complex, composed of CENPI, CENPK, CENPL, CENPO, CENPP, CENPQ, CENPR and CENPS. The CENPA-CAD complex interacts with the CENPA-NAC complex, at least composed of CENPA, CENPC, CENPH, CENPM, CENPN, CENPT and CENPU. Interacts with TASOR. In terms of tissue distribution, expressed in the spermatogonia and spermatocytes.

Its subcellular location is the nucleus. It localises to the chromosome. The protein resides in the centromere. The protein localises to the kinetochore. Its function is as follows. Transcription coregulator that can have both coactivator and corepressor functions. Involved in the coactivation of nuclear receptors for retinoid X (RXRs) and thyroid hormone (TRs) in a ligand-dependent fashion. In contrast, it does not coactivate nuclear receptors for retinoic acid, vitamin D, progesterone receptor, nor glucocorticoid. Acts as a coactivator for estrogen receptor alpha. Acts as a transcriptional corepressor via its interaction with the NFKB1 NF-kappa-B subunit, possibly by interfering with the transactivation domain of NFKB1. Induces apoptosis in breast cancer cells, but not in other cancer cells, via a caspase-2 mediated pathway that involves mitochondrial membrane permeabilization but does not require other caspases. May also act as an inhibitor of cyclin A-associated kinase. Also acts a component of the CENPA-CAD (nucleosome distal) complex, a complex recruited to centromeres which is involved in assembly of kinetochore proteins, mitotic progression and chromosome segregation. May be involved in incorporation of newly synthesized CENPA into centromeres via its interaction with the CENPA-NAC complex. In Mus musculus (Mouse), this protein is Centromere protein R (Itgb3bp).